A 178-amino-acid polypeptide reads, in one-letter code: Large ribosomal subunit protein uL6 (178 aa).

This sequence belongs to the universal ribosomal protein uL6 family. In terms of assembly, part of the 50S ribosomal subunit.

Functionally, this protein binds to the 23S rRNA, and is important in its secondary structure. It is located near the subunit interface in the base of the L7/L12 stalk, and near the tRNA binding site of the peptidyltransferase center. This chain is Large ribosomal subunit protein uL6, found in Thermoplasma acidophilum (strain ATCC 25905 / DSM 1728 / JCM 9062 / NBRC 15155 / AMRC-C165).